The sequence spans 192 residues: MIDFDGYRPNVGIVICNAERQVLWAKRYGQNSWQFPQGGINDNETAEQAMYRELYEEAGLTPKDVEILYVSKHWLRYKLPKRLLRHDNRPICIGQKQRWFLLQLVSDEKRINMQHTKSPEFDGWRWVSFWYPVRQVVTFKKDVYRKVMKEFALFLFDTNLKSRLSVPEEKKMFSSVKKKLIHKKNHKYSSNQ.

One can recognise a Nudix hydrolase domain in the interval 6–149 (GYRPNVGIVI…KKDVYRKVMK (144 aa)). The Nudix box signature appears at 38-59 (GGINDNETAEQAMYRELYEEAG).

This sequence belongs to the Nudix hydrolase family. RppH subfamily. A divalent metal cation is required as a cofactor.

Its function is as follows. Accelerates the degradation of transcripts by removing pyrophosphate from the 5'-end of triphosphorylated RNA, leading to a more labile monophosphorylated state that can stimulate subsequent ribonuclease cleavage. The sequence is that of RNA pyrophosphohydrolase from Histophilus somni (strain 129Pt) (Haemophilus somnus).